A 461-amino-acid chain; its full sequence is tRNA modification GTPase MnmE (461 aa).

(6S)-5-formyl-5,6,7,8-tetrahydrofolate is bound by residues R22, E87, and R126. A TrmE-type G domain is found at 223 to 382 (GLSTVILGRP…LEEAIAALFF (160 aa)). N233 contributes to the K(+) binding site. GTP contacts are provided by residues 233–238 (NVGKSS), 252–258 (TDIAGTT), and 277–280 (DTAG). S237 serves as a coordination point for Mg(2+). T252, I254, and T257 together coordinate K(+). A Mg(2+)-binding site is contributed by T258. A (6S)-5-formyl-5,6,7,8-tetrahydrofolate-binding site is contributed by K461.

This sequence belongs to the TRAFAC class TrmE-Era-EngA-EngB-Septin-like GTPase superfamily. TrmE GTPase family. In terms of assembly, homodimer. Heterotetramer of two MnmE and two MnmG subunits. The cofactor is K(+).

The protein resides in the cytoplasm. Exhibits a very high intrinsic GTPase hydrolysis rate. Involved in the addition of a carboxymethylaminomethyl (cmnm) group at the wobble position (U34) of certain tRNAs, forming tRNA-cmnm(5)s(2)U34. The chain is tRNA modification GTPase MnmE from Lysinibacillus sphaericus (strain C3-41).